A 404-amino-acid polypeptide reads, in one-letter code: tRNA pseudouridine synthase D (404 aa).

Asp79 functions as the Nucleophile in the catalytic mechanism. The region spanning Gly154–Val364 is the TRUD domain.

Belongs to the pseudouridine synthase TruD family.

The catalysed reaction is uridine(13) in tRNA = pseudouridine(13) in tRNA. Functionally, responsible for synthesis of pseudouridine from uracil-13 in transfer RNAs. The protein is tRNA pseudouridine synthase D of Geobacter metallireducens (strain ATCC 53774 / DSM 7210 / GS-15).